A 219-amino-acid chain; its full sequence is Cytidylate kinase (219 aa).

21–29 (GPAASGKGT) is an ATP binding site.

It belongs to the cytidylate kinase family. Type 1 subfamily.

It localises to the cytoplasm. It carries out the reaction CMP + ATP = CDP + ADP. The catalysed reaction is dCMP + ATP = dCDP + ADP. The polypeptide is Cytidylate kinase (Rickettsia felis (strain ATCC VR-1525 / URRWXCal2) (Rickettsia azadi)).